The following is a 108-amino-acid chain: Large ribosomal subunit protein uL24 (108 aa).

It belongs to the universal ribosomal protein uL24 family. In terms of assembly, part of the 50S ribosomal subunit.

One of two assembly initiator proteins, it binds directly to the 5'-end of the 23S rRNA, where it nucleates assembly of the 50S subunit. Its function is as follows. One of the proteins that surrounds the polypeptide exit tunnel on the outside of the subunit. The protein is Large ribosomal subunit protein uL24 of Geotalea daltonii (strain DSM 22248 / JCM 15807 / FRC-32) (Geobacter daltonii).